The sequence spans 394 residues: Elongation factor Tu 2 (394 aa).

The region spanning 10–204 is the tr-type G domain; that stretch reads KPHVNVGTIG…ALDSYIPEPE (195 aa). Residues 19 to 26 are G1; the sequence is GHVDHGKT. 19–26 provides a ligand contact to GTP; sequence GHVDHGKT. Thr-26 provides a ligand contact to Mg(2+). The tract at residues 60-64 is G2; it reads GITIS. The tract at residues 81 to 84 is G3; sequence DCPG. GTP-binding positions include 81-85 and 136-139; these read DCPGH and NKCD. The interval 136-139 is G4; that stretch reads NKCD. Positions 174–176 are G5; the sequence is SAL.

This sequence belongs to the TRAFAC class translation factor GTPase superfamily. Classic translation factor GTPase family. EF-Tu/EF-1A subfamily. As to quaternary structure, monomer.

The protein localises to the cytoplasm. The catalysed reaction is GTP + H2O = GDP + phosphate + H(+). GTP hydrolase that promotes the GTP-dependent binding of aminoacyl-tRNA to the A-site of ribosomes during protein biosynthesis. This is Elongation factor Tu 2 from Pseudoalteromonas translucida (strain TAC 125).